We begin with the raw amino-acid sequence, 67 residues long: Kappa-conotoxin-like Em11.8 (67 aa).

A signal peptide spans 1–26 (MMFRLTSVSCFLLVIACLNLFQVVLT). Cystine bridges form between C29–C43, C36–C48, C42–C51, and C47–C55. Position 59 is a phenylalanine amide (F59). The propeptide occupies 63–67 (ATFQE).

Belongs to the conotoxin I2 superfamily. In terms of tissue distribution, expressed by the venom duct.

The protein resides in the secreted. Inhibits the vertebrate voltage-gated potassium channels Kv1.1/KCNA1 and Kv1.3/KCNA3. This chain is Kappa-conotoxin-like Em11.8, found in Conus emaciatus (False virgin cone).